Here is a 372-residue protein sequence, read N- to C-terminus: Chaperone protein DnaJ (372 aa).

Residues N3–G68 enclose the J domain. The CR-type zinc-finger motif lies at G130 to R212. Zn(2+)-binding residues include C143, C146, C160, C163, C186, C189, C200, and C203. CXXCXGXG motif repeat units follow at residues C143–G150, C160–G167, C186–G193, and C200–G207.

This sequence belongs to the DnaJ family. Homodimer. The cofactor is Zn(2+).

It is found in the cytoplasm. Functionally, participates actively in the response to hyperosmotic and heat shock by preventing the aggregation of stress-denatured proteins and by disaggregating proteins, also in an autonomous, DnaK-independent fashion. Unfolded proteins bind initially to DnaJ; upon interaction with the DnaJ-bound protein, DnaK hydrolyzes its bound ATP, resulting in the formation of a stable complex. GrpE releases ADP from DnaK; ATP binding to DnaK triggers the release of the substrate protein, thus completing the reaction cycle. Several rounds of ATP-dependent interactions between DnaJ, DnaK and GrpE are required for fully efficient folding. Also involved, together with DnaK and GrpE, in the DNA replication of plasmids through activation of initiation proteins. The sequence is that of Chaperone protein DnaJ from Finegoldia magna (strain ATCC 29328 / DSM 20472 / WAL 2508) (Peptostreptococcus magnus).